We begin with the raw amino-acid sequence, 234 residues long: Glucosamine-6-phosphate deaminase (234 aa).

The active-site Proton acceptor; for enolization step is the D63. Residue N129 is the For ring-opening step of the active site. Catalysis depends on H131, which acts as the Proton acceptor; for ring-opening step. The active-site For ring-opening step is the E136.

It belongs to the glucosamine/galactosamine-6-phosphate isomerase family. NagB subfamily.

The catalysed reaction is alpha-D-glucosamine 6-phosphate + H2O = beta-D-fructose 6-phosphate + NH4(+). It functions in the pathway amino-sugar metabolism; N-acetylneuraminate degradation; D-fructose 6-phosphate from N-acetylneuraminate: step 5/5. Functionally, catalyzes the reversible isomerization-deamination of glucosamine 6-phosphate (GlcN6P) to form fructose 6-phosphate (Fru6P) and ammonium ion. The protein is Glucosamine-6-phosphate deaminase of Listeria monocytogenes serovar 1/2a (strain ATCC BAA-679 / EGD-e).